Reading from the N-terminus, the 1233-residue chain is MVESLTVENQEHNVQPPSVTSAGDSYSTLATDLPLPSTNDIIESRDQLTESDLDEAINATENFAQELSSQRKSSKLKGHKKKNQGQIKANRDRDTIVKLSSSVGETEEASTRDAISHDLERKDDVIEIATDTINDATESPTQIPIDVNVVIKETSTNNVAEGTENVPPIKESTGIEVGNSPITRRKKNKKKKTTNRRGRNSSNPADTTDLSKQSTLDSILVGIEEYLQEDGSKNEDIKVNIVQDEPVNVEKMDIRTRNESSDKTFDIDVPNKDNVDETSSKSENNINEEKAEHTLPREENEILNVNEGNAASFKHQLEPHGLEAGDENGQASTKDVESESLTKNGFNFKENESKHLKAGEKQQTESDRDGISPSVLAKNQKETEIGKEDHVFEQKDKEDEKCRKELSVNHENNMSHNFNAAGSDSIIPPETERETYDDETMGPTKRISDNEKNLQHGTNDISVEVEKEEEEEEEEEENSTFSKVKKENVTGEQEAVRNNEVSGTEEESTSKGEEIMGGDEKQSEAGEKSSIIEIEGSANSAKISKDNLVLEDEAEAPTQENKPTEVVGEIDIPDAPRDDVEIVEAVEKNIIPEDLEVAKEDQEGEQVKLDEPVKAMKDDKIAMRGAESISEDMKKKQEGTAELSNEKAKKEVDETARESAEGVEVEKSKTPESPKVVKRCTSGRPEDLQINERDPEVLKEDVRVPDEDVKPEIATTIENSEEEDPKSQRVQISTEQAETTQKDMGDVGSTTSFKEEEKPKRFEITQEGDKITGKDTNHEHGEATEAASENSKASDVGTAEKYIEPSSESVKKDTEEDAEVENSEKTEFIKVKAELENLDAPKEAEVTAELNKENEDVEVDTEEDAEVENSEKTEFIKVKAELGNLDAPKEAEVTAELNKENEDVEVAATSKEDIETKCSEPAETPIEDGTCTEAEVSKKDAEAVTKEDENMENSKIAEALKDVTGDQEIDDINISDEFQRTVELPELEKQDIKDNKGEDKELEVEETEKETSLPDLVVEENITEEKNEIKQEEEEVSQLDFNETESISKEAPNNDENGFEDQSTRENPKKASADDIFKDILDETNEFLEQLKIVDDSELNALLQSLDAKDSTTQTTEQSKKNNDKPQDVITTSEIRKLNEKEPVYIYTSLAGGGFHMIPRTNRLSTILTANRIPFTYRDLGTDDEARKVWKTFSKGRSLPGVVRGHNDLIGNWEEIEEANEDYKLRELIYDTI.

Disordered stretches follow at residues 1–39 (MVES…PSTN), 65–116 (QELS…DAIS), 160–211 (AEGT…TDLS), 250–577 (EKMD…DAPR), 594–825 (DLEV…NSEK), 851–872 (NKEN…NSEK), and 902–955 (EDVE…ENSK). A compositionally biased stretch (basic residues) spans 72-83 (KSSKLKGHKKKN). Serine 180 carries the post-translational modification Phosphoserine. Basic residues predominate over residues 183-199 (TRRKKNKKKKTTNRRGR). Polar residues predominate over residues 201-211 (SSNPADTTDLS). Composition is skewed to basic and acidic residues over residues 250–280 (EKMD…ETSS) and 287–300 (NEEK…REEN). Residues 329 to 345 (GQASTKDVESESLTKNG) are compositionally biased toward polar residues. Basic and acidic residues-rich tracts occupy residues 349–370 (KENE…DRDG) and 379–408 (NQKE…ELSV). Residues 409 to 422 (NHENNMSHNFNAAG) are compositionally biased toward polar residues. Position 462 is a phosphoserine (serine 462). Positions 466 to 478 (EKEEEEEEEEEEN) are enriched in acidic residues. Basic and acidic residues-rich tracts occupy residues 484 to 497 (VKKE…EAVR), 508 to 527 (STSK…EAGE), 594 to 622 (DLEV…DKIA), 631 to 672 (EDMK…KTPE), and 684 to 711 (RPED…DVKP). Serine 523 is subject to Phosphoserine. A compositionally biased stretch (polar residues) spans 728–739 (QRVQISTEQAET). A compositionally biased stretch (basic and acidic residues) spans 753 to 783 (FKEEEKPKRFEITQEGDKITGKDTNHEHGEA). Residues 855-868 (EDVEVDTEEDAEVE) are compositionally biased toward acidic residues. At threonine 861 the chain carries Phosphothreonine. 2 stretches are compositionally biased toward basic and acidic residues: residues 910-920 (SKEDIETKCSE) and 935-948 (EVSK…TKED). Serine 975 bears the Phosphoserine mark. Disordered stretches follow at residues 984–1071 (LPEL…PKKA) and 1109–1128 (KDST…KPQD). Residues 986 to 999 (ELEKQDIKDNKGED) are compositionally biased toward basic and acidic residues. A phosphoserine mark is found at serine 1037 and serine 1046. Basic and acidic residues-rich tracts occupy residues 1062–1071 (QSTRENPKKA) and 1118–1127 (QSKKNNDKPQ). Residues 1132–1233 (TSEIRKLNEK…KLRELIYDTI (102 aa)) form the Glutaredoxin domain.

This is an uncharacterized protein from Saccharomyces cerevisiae (strain ATCC 204508 / S288c) (Baker's yeast).